Reading from the N-terminus, the 193-residue chain is Annexin-2 receptor (193 aa).

The segment covering 78–87 (QSTLEPSTAK) has biased composition (polar residues). A disordered region spans residues 78–111 (QSTLEPSTAKPTEFSWPGTQKQQEAPVEEVGQAE).

As to expression, widely expressed. Highly expressed in lymphocytes. Expressed in both resting CD4(+) and CD8(+) T-cells.

Its function is as follows. May act as a receptor for annexin II on marrow stromal cells to induce osteoclast formation. This is Annexin-2 receptor (ANXA2R) from Homo sapiens (Human).